A 210-amino-acid chain; its full sequence is Outer surface protein C (210 aa).

A signal peptide spans 1–18; sequence MKKNTLSAILMTLFLFIS. Cys-19 is lipidated: N-palmitoyl cysteine. A lipid anchor (S-diacylglycerol cysteine) is attached at Cys-19.

The protein belongs to the OspC lipoprotein family. Homodimer. Binds human plasminogen on the bacterial surface, also binds human plasmin. Interacts with tick I.ricinus salivary protein Iric-1. Interacts with human complement C4 beta chain (C4B); whole bacteria bind to wells coated with C4b. Binding is inhibited by human complement factor C2.

It is found in the cell outer membrane. It localises to the cell surface. A major immunodominant protein in mammalian hosts. Required for the initial stages of mammalian infection. Interaction with tick I.ricinus salivary protein Salp15 protects the bacteria from antibody-mediated killing in vitro and in vivo. Inhibits macrophage-mediated phagocytosis of the bacteria. Binds human plasminogen; this probably confers an extracellular protease activity on the bacteria that allows it to traverse tissue. Binds human complement C4-B, which may inhibit the complement cascade. Experiments in mice suggest it may play another role after initial infection. This chain is Outer surface protein C, found in Borreliella burgdorferi (strain ATCC 35210 / DSM 4680 / CIP 102532 / B31) (Borrelia burgdorferi).